The sequence spans 237 residues: Ubiquinone biosynthesis O-methyltransferase (237 aa).

The S-adenosyl-L-methionine site is built by arginine 38, glycine 58, aspartate 79, and methionine 124.

The protein belongs to the methyltransferase superfamily. UbiG/COQ3 family.

It catalyses the reaction a 3-demethylubiquinol + S-adenosyl-L-methionine = a ubiquinol + S-adenosyl-L-homocysteine + H(+). The catalysed reaction is a 3-(all-trans-polyprenyl)benzene-1,2-diol + S-adenosyl-L-methionine = a 2-methoxy-6-(all-trans-polyprenyl)phenol + S-adenosyl-L-homocysteine + H(+). It participates in cofactor biosynthesis; ubiquinone biosynthesis. Functionally, O-methyltransferase that catalyzes the 2 O-methylation steps in the ubiquinone biosynthetic pathway. This is Ubiquinone biosynthesis O-methyltransferase from Acinetobacter baumannii (strain SDF).